Consider the following 154-residue polypeptide: MISTGIAAQNRKGRFNYTILETLEAGMVLKGPEVKSLRLGRATINEAYAGDRDGEIWLFNSYIPEYQGGVLSRFETRAPRKLLLHRKQVDKLLGAVARDGVTLVPLDIHFNARGVAKVTLGIGEGRKKADKRQAIADRDWQRDKARLLRNKGRE.

Belongs to the SmpB family.

The protein resides in the cytoplasm. In terms of biological role, required for rescue of stalled ribosomes mediated by trans-translation. Binds to transfer-messenger RNA (tmRNA), required for stable association of tmRNA with ribosomes. tmRNA and SmpB together mimic tRNA shape, replacing the anticodon stem-loop with SmpB. tmRNA is encoded by the ssrA gene; the 2 termini fold to resemble tRNA(Ala) and it encodes a 'tag peptide', a short internal open reading frame. During trans-translation Ala-aminoacylated tmRNA acts like a tRNA, entering the A-site of stalled ribosomes, displacing the stalled mRNA. The ribosome then switches to translate the ORF on the tmRNA; the nascent peptide is terminated with the 'tag peptide' encoded by the tmRNA and targeted for degradation. The ribosome is freed to recommence translation, which seems to be the essential function of trans-translation. The protein is SsrA-binding protein of Gluconacetobacter diazotrophicus (strain ATCC 49037 / DSM 5601 / CCUG 37298 / CIP 103539 / LMG 7603 / PAl5).